Reading from the N-terminus, the 159-residue chain is 2-C-methyl-D-erythritol 2,4-cyclodiphosphate synthase (159 aa).

D8 and H10 together coordinate a divalent metal cation. 4-CDP-2-C-methyl-D-erythritol 2-phosphate is bound by residues 8–10 and 34–35; these read DVH and HS. An a divalent metal cation-binding site is contributed by H42. 4-CDP-2-C-methyl-D-erythritol 2-phosphate is bound by residues 56–58, 61–65, 132–135, F139, and R142; these read DIG, FPDTD, and TTTE.

This sequence belongs to the IspF family. Homotrimer. The cofactor is a divalent metal cation.

The catalysed reaction is 4-CDP-2-C-methyl-D-erythritol 2-phosphate = 2-C-methyl-D-erythritol 2,4-cyclic diphosphate + CMP. The protein operates within isoprenoid biosynthesis; isopentenyl diphosphate biosynthesis via DXP pathway; isopentenyl diphosphate from 1-deoxy-D-xylulose 5-phosphate: step 4/6. In terms of biological role, involved in the biosynthesis of isopentenyl diphosphate (IPP) and dimethylallyl diphosphate (DMAPP), two major building blocks of isoprenoid compounds. Catalyzes the conversion of 4-diphosphocytidyl-2-C-methyl-D-erythritol 2-phosphate (CDP-ME2P) to 2-C-methyl-D-erythritol 2,4-cyclodiphosphate (ME-CPP) with a corresponding release of cytidine 5-monophosphate (CMP). The polypeptide is 2-C-methyl-D-erythritol 2,4-cyclodiphosphate synthase (Finegoldia magna (strain ATCC 29328 / DSM 20472 / WAL 2508) (Peptostreptococcus magnus)).